A 793-amino-acid chain; its full sequence is Splicing factor 3A subunit 1 (793 aa).

The disordered stretch occupies residues 1–42; the sequence is MPAGPVQAVPPPPPAATEPKQPTEEEASSKEDSTPSKPVVGI. A Glycyl lysine isopeptide (Lys-Gly) (interchain with G-Cter in SUMO2) cross-link involves residue K20. The segment covering 21–34 has biased composition (basic and acidic residues); it reads QPTEEEASSKEDST. An SURP motif 1 repeat occupies 52–94; the sequence is IVDKTASFVARNGPEFEARIRQNEINNPKFNFLNPNDPYHAYY. K55 is modified (N6-acetyllysine). K131 participates in a covalent cross-link: Glycyl lysine isopeptide (Lys-Gly) (interchain with G-Cter in SUMO2). The SURP motif 2 repeat unit spans residues 166–208; sequence VVKLTAQFVARNGRQFLTQLMQKEQRNYQFDFLRPQHSLFNYF. Positions 318-412 are disordered; it reads GESEEVEMEV…PAPAPDEYLV (95 aa). Residues S320, S329, and S359 each carry the phosphoserine modification. Composition is skewed to acidic residues over residues 320–334 and 354–364; these read SEEV…EEDE and DMDEGSDDEEE. Positions 368–384 are enriched in pro residues; it reads VPPPPETPMPPPLPPTP. Basic and acidic residues predominate over residues 388 to 397; it reads IVRKDYDPKA. S413 carries the phosphoserine modification. Residue K424 forms a Glycyl lysine isopeptide (Lys-Gly) (interchain with G-Cter in SUMO2) linkage. A Phosphoserine modification is found at S451. Y456 is modified (phosphotyrosine). Basic and acidic residues predominate over residues 488–502; that stretch reads IGEEEIQKPEEKVTW. Disordered regions lie at residues 488-518, 530-584, and 666-685; these read IGEE…AAQA, HKAK…AMPP, and PMPP…SKKL. K499 is covalently cross-linked (Glycyl lysine isopeptide (Lys-Gly) (interchain with G-Cter in SUMO2)). Position 508 is a phosphoserine (S508). Residues 509–518 are compositionally biased toward polar residues; that stretch reads MARTQQAAQA. K542 participates in a covalent cross-link: Glycyl lysine isopeptide (Lys-Gly) (interchain with G-Cter in SUMO2). The span at 563-572 shows a compositional bias: polar residues; sequence ATNIPSSAPP. Over residues 666–675 the composition is skewed to pro residues; it reads PMPPVHPPPP. The required and sufficient for nuclear import stretch occupies residues 680 to 702; that stretch reads PASKKLKTEDSLMPEEEFLRRNK. K686 is covalently cross-linked (Glycyl lysine isopeptide (Lys-Gly) (interchain with G-Cter in SUMO2)). The 87-residue stretch at 707–793 folds into the Ubiquitin-like domain; that stretch reads IKVQVPNMQD…ALKERGGRKK (87 aa). Y759 carries the phosphotyrosine modification.

As to quaternary structure, component of the 17S U2 SnRNP complex, a ribonucleoprotein complex that contains small nuclear RNA (snRNA) U2 and a number of specific proteins. Part of the SF3A subcomplex of the 17S U2 SnRNP complex which is composed of three subunits; SF3A3/SAP61, SF3A2/SAP62 and SF3A1/SAP114. SF3A associates with the splicing factor SF3B and a 12S RNA unit to form the mature 17S U2 small nuclear ribonucleoprotein complex (17S U2 snRNP). SF3A1 functions as a scaffold that interacts directly with both SF3A2 and SF3A3. Identified in the spliceosome 'E' complex, a precursor of the spliceosome 'A' complex. Identified in the spliceosome 'A' and 'B' complexes. Identified in the spliceosome 'C' complex. Interacts with P2RX6; resulting in a reduction of the splicing activity.

The protein localises to the nucleus. It is found in the nucleus speckle. Its function is as follows. Component of the 17S U2 SnRNP complex of the spliceosome, a large ribonucleoprotein complex that removes introns from transcribed pre-mRNAs. The 17S U2 SnRNP complex (1) directly participates in early spliceosome assembly and (2) mediates recognition of the intron branch site during pre-mRNA splicing by promoting the selection of the pre-mRNA branch-site adenosine, the nucleophile for the first step of splicing. Within the 17S U2 SnRNP complex, SF3A1 is part of the SF3A subcomplex that contributes to the assembly of the 17S U2 snRNP, and the subsequent assembly of the pre-spliceosome 'E' complex and the pre-catalytic spliceosome 'A' complex. Involved in pre-mRNA splicing as a component of pre-catalytic spliceosome 'B' complexes. This is Splicing factor 3A subunit 1 (SF3A1) from Bos taurus (Bovine).